Reading from the N-terminus, the 78-residue chain is Structural DNA-binding protein p10 (78 aa).

Over residues 1–27 the composition is skewed to low complexity; the sequence is MPTKAGTKSTANKKTTKGSSKSGSSRG. The segment at 1–41 is disordered; it reads MPTKAGTKSTANKKTTKGSSKSGSSRGHTGKTHASSSMHSG.

Belongs to the asfivirus P10 family.

Its subcellular location is the virion. Its function is as follows. May play a role in genome packaging through direct interaction with viral DNA. Binds to ssDNA and dsDNA with the same apparent affinity in vitro. The chain is Structural DNA-binding protein p10 from African swine fever virus (strain Badajoz 1971 Vero-adapted) (Ba71V).